The sequence spans 240 residues: Ribonuclease HII (240 aa).

The region spanning 29–220 is the RNase H type-2 domain; it reads EPIAGVDEAG…VRRAAGLEPL (192 aa). A divalent metal cation contacts are provided by aspartate 35, glutamate 36, and aspartate 129.

It belongs to the RNase HII family. Mn(2+) is required as a cofactor. The cofactor is Mg(2+).

The protein localises to the cytoplasm. It carries out the reaction Endonucleolytic cleavage to 5'-phosphomonoester.. Its function is as follows. Endonuclease that specifically degrades the RNA of RNA-DNA hybrids. The chain is Ribonuclease HII from Nocardioides sp. (strain ATCC BAA-499 / JS614).